Here is an 81-residue protein sequence, read N- to C-terminus: MAEISTDIAAMSFEEALAELDLIVRRLEEGKGRLDDSIVAYERGALLKKHCEAKLEEARTKVERIVSGPDGSVALQAVDNV.

The protein belongs to the XseB family. As to quaternary structure, heterooligomer composed of large and small subunits.

It is found in the cytoplasm. It carries out the reaction Exonucleolytic cleavage in either 5'- to 3'- or 3'- to 5'-direction to yield nucleoside 5'-phosphates.. Its function is as follows. Bidirectionally degrades single-stranded DNA into large acid-insoluble oligonucleotides, which are then degraded further into small acid-soluble oligonucleotides. This is Exodeoxyribonuclease 7 small subunit from Paramagnetospirillum magneticum (strain ATCC 700264 / AMB-1) (Magnetospirillum magneticum).